Here is a 227-residue protein sequence, read N- to C-terminus: Zinc finger protein ZAT10 (227 aa).

The C2H2-type 1 zinc finger occupies 80–102 (YKCSVCDKTFSSYQALGGHKASH). The segment at 96-128 (GGHKASHRKNLSQTLSGGGDDHSTSSATTTSAV) is disordered. Positions 119–128 (TSSATTTSAV) are enriched in low complexity. A C2H2-type 2 zinc finger spans residues 136–158 (HVCTICNKSFPSGQALGGHKRCH). The segment at 168–189 (SSVSNSEGAGSTSHVSSSHRGF) is disordered. Residues 174-186 (EGAGSTSHVSSSH) are compositionally biased toward polar residues.

In terms of tissue distribution, expressed in roots, stems and leaves.

Its subcellular location is the nucleus. Its function is as follows. Transcriptional repressor involved in abiotic stress responses. Can repress the stress responsive genes DREB1A and LTI78. Probably involved in jasmonate (JA) early signaling response. May regulate the expression of the JA biosynthesis gene LOX3 and control the expression of TIFY10A/JAZ1, a key repressor in the JA signaling cascade. The chain is Zinc finger protein ZAT10 (ZAT10) from Arabidopsis thaliana (Mouse-ear cress).